Consider the following 430-residue polypeptide: Arrestin-related trafficking adapter 10 (430 aa).

A disordered region spans residues 55–75 (AEADRHSSRLPQDPQTQYTKE). The span at 63 to 72 (RLPQDPQTQY) shows a compositional bias: polar residues.

The protein belongs to the ART10 family.

It is found in the cytoplasm. May regulate endocytosis by recruiting RSP5 ubiquitin ligase activity to specific plasma membrane proteins in response to extracellular stimuli. This is Arrestin-related trafficking adapter 10 (ART10) from Eremothecium gossypii (strain ATCC 10895 / CBS 109.51 / FGSC 9923 / NRRL Y-1056) (Yeast).